Reading from the N-terminus, the 633-residue chain is Guanylate-binding protein 6 (633 aa).

Residues 1–310 (MESGPKMLAP…EAINSGAVPC (310 aa)) are GTPase domain (Globular). The 243-residue stretch at 35-277 (SQPVVVVAIV…FCSYIFTHAR (243 aa)) folds into the GB1/RHD3-type G domain. Residues 45-52 (GLYRTGKS), 67-69 (LGS), and 97-101 (DTEGL) contribute to the GTP site.

The protein belongs to the TRAFAC class dynamin-like GTPase superfamily. GB1/RHD3 GTPase family. GB1 subfamily. Post-translationally, (Microbial infection) Ubiquitinated by S.flexneri IpaH9.8, leading to its degradation by the proteasome, thereby preventing its ability to promote host defense against bacterial infection.

The protein resides in the cytoplasmic vesicle. It catalyses the reaction GTP + H2O = GDP + phosphate + H(+). In terms of biological role, interferon (IFN)-inducible GTPase that plays important roles in innate immunity against a diverse range of bacterial, viral and protozoan pathogens, such as bacterial pathogens Listeria monocytogenes and Mycobacterium bovis BCG as well as the protozoan pathogen Toxoplasma gondii. Confers protection to several pathogens, including the bacterial pathogens Listeria monocytogenes and Mycobacterium bovis BCG as well as the protozoan pathogen Toxoplasma gondii. This is Guanylate-binding protein 6 (GBP6) from Homo sapiens (Human).